A 405-amino-acid polypeptide reads, in one-letter code: Na(+)/H(+) antiporter NhaA 1 (405 aa).

11 helical membrane passes run 20 to 40 (FVSD…AMIV), 68 to 88 (LHLW…GLEV), 105 to 125 (LPVL…VGVV), 134 to 154 (GWAI…GLLG), 163 to 183 (LFLL…IAAF), 186 to 206 (ANLK…MVGM), 214 to 234 (IWPY…SGVH), 263 to 283 (GLAP…NAGV), 301 to 321 (IAAG…VAAV), 334 to 354 (WIEI…SLFI), and 371 to 391 (IGIL…LRLT).

It belongs to the NhaA Na(+)/H(+) (TC 2.A.33) antiporter family.

The protein localises to the cell inner membrane. The catalysed reaction is Na(+)(in) + 2 H(+)(out) = Na(+)(out) + 2 H(+)(in). In terms of biological role, na(+)/H(+) antiporter that extrudes sodium in exchange for external protons. The protein is Na(+)/H(+) antiporter NhaA 1 of Erythrobacter litoralis (strain HTCC2594).